The chain runs to 341 residues: Hyaluronidase A (341 aa).

Asparagine 3, asparagine 68, and asparagine 83 each carry an N-linked (GlcNAc...) asparagine glycan. Cystine bridges form between cysteine 23–cysteine 311 and cysteine 189–cysteine 201.

It belongs to the glycosyl hydrolase 56 family. As to expression, expressed by the venom gland.

Its subcellular location is the secreted. The catalysed reaction is Random hydrolysis of (1-&gt;4)-linkages between N-acetyl-beta-D-glucosamine and D-glucuronate residues in hyaluronate.. In terms of biological role, may hydrolyze high molecular weight hyaluronic acid to produce small oligosaccharides. The sequence is that of Hyaluronidase A from Vespa velutina (Asian yellow-legged hornet).